Consider the following 22-residue polypeptide: Brevinin-1OKd (22 aa).

A Lysine amide modification is found at lysine 22.

Expressed by the skin glands.

It is found in the secreted. Functionally, antimicrobial peptide. The chain is Brevinin-1OKd from Nidirana okinavana (Kampira Falls frog).